The primary structure comprises 616 residues: Proline--tRNA ligase (616 aa).

It belongs to the class-II aminoacyl-tRNA synthetase family. ProS type 1 subfamily. In terms of assembly, homodimer.

Its subcellular location is the cytoplasm. The catalysed reaction is tRNA(Pro) + L-proline + ATP = L-prolyl-tRNA(Pro) + AMP + diphosphate. Functionally, catalyzes the attachment of proline to tRNA(Pro) in a two-step reaction: proline is first activated by ATP to form Pro-AMP and then transferred to the acceptor end of tRNA(Pro). As ProRS can inadvertently accommodate and process non-cognate amino acids such as alanine and cysteine, to avoid such errors it has two additional distinct editing activities against alanine. One activity is designated as 'pretransfer' editing and involves the tRNA(Pro)-independent hydrolysis of activated Ala-AMP. The other activity is designated 'posttransfer' editing and involves deacylation of mischarged Ala-tRNA(Pro). The misacylated Cys-tRNA(Pro) is not edited by ProRS. The sequence is that of Proline--tRNA ligase from Lactococcus lactis subsp. cremoris (strain MG1363).